A 670-amino-acid chain; its full sequence is MEVLKLCLLLTRKKQFEVELIPEKIGARRPWKLETSSTATEAVVSVVTYLEATSGNARDAKEAGIYIRVYGAGWMIPEFVRMLMLHYSKHGECILQEIGAAFRGEHATDLLLICDGKETVRAHKLVLAAASPLIRMILEETPVLDGVTTVYFPEVQVSYFRLLLDFLYSGQVYVRSVEEYHHLQDLLALLQIKASIWKNSDGSDAGEPRKSEPLVDINRNTEGITGSSVVHQHPSRRRRSKSQDSLSGDSASGGGGTGSQAGTPKKVSVKSERHSAGSSVDGDGDRDREENLEYLDEVEEAIIKSNNNHPLHPHQHHLVAGSGGHHLHHHHHHHHRQLHQISRHDGDDDAGGGSGNDGASEGGSGESGRAGSVAGESAGDRPTPTNLSSGGGGAGSGRRSGSGEPTEPAEDDEDYELDVEDRGGDGDEAAGEGETRSRRSDPSANRRRSSSDPVNLSIVKQQQDVDSDDANIDVETIGTATTKTLLPPRYLDPFRTKRKAAAYYIHPADAEALKPMDHEGLLHNSPDNYVVTPHRKRRPGFHNSPAQNPPFVPSYLDDLRARSKCFLSAPPTYLPEKYLSVLTRWNLKTHLRVHTGEKPFACRLCVAMFKQKAHLLKHLCSVHRNIINAPEAGGRYTCCFCSLVFETLQELVRHLSGHHNNLLLSKNLHE.

Positions 108 to 176 (TDLLLICDGK…LYSGQVYVRS (69 aa)) constitute a BTB domain. Disordered regions lie at residues 200 to 288 (SDGS…DRDR) and 307 to 470 (NNHP…SDDA). Residues 218-230 (NRNTEGITGSSVV) are compositionally biased toward polar residues. Residues 325 to 338 (HHLHHHHHHHHRQL) are compositionally biased toward basic residues. 2 stretches are compositionally biased toward gly residues: residues 351–368 (GGGS…GESG) and 389–400 (SGGGGAGSGRRS). Over residues 407–419 (EPAEDDEDYELDV) the composition is skewed to acidic residues. Residues 451 to 464 (SDPVNLSIVKQQQD) are compositionally biased toward polar residues. The segment at 586–594 (NLKTHLRVH) adopts a C2H2-type 1; degenerate zinc-finger fold. C2H2-type zinc fingers lie at residues 600 to 623 (FACR…CSVH) and 636 to 658 (YTCC…LSGH).

The protein resides in the nucleus. Its function is as follows. Transcription factor required for terminalia development. Negative regulator of the JAK/STAT pathway: represses JAK/STAT-dependent expression of ventral veins lacking (vvl) in the posterior spiracles. This Culex quinquefasciatus (Southern house mosquito) protein is Transcription factor Ken 2.